The chain runs to 482 residues: Ubiquitin carboxyl-terminal hydrolase MINDY-1 (482 aa).

Residues 1 to 119 (MEQPQAECPA…RPQQLPQSPR (119 aa)) are disordered. The span at 21–66 (ESEKHEALSGPEKHPQDKDGADAAPEKHPQDKDGADAHGEAGKQKS) shows a compositional bias: basic and acidic residues. The span at 82–94 (CPPPEASSSPPGP) shows a compositional bias: pro residues. A compositionally biased stretch (polar residues) spans 106-119 (EACSRPQQLPQSPR). Serine 117 carries the phosphoserine modification. The Nucleophile role is filled by cysteine 151. Histidine 333 (proton acceptor) is an active-site residue. The interval 402–441 (QVDQDYLIALSLQQQQQPQGMLGLSDLELAQQLQQEEYQQ) is ubiquitin-binding domain (UBD). Positions 437–446 (EEYQQQQAVQ) are enriched in low complexity. Residues 437–482 (EEYQQQQAVQPVRTRAPSSPGRGATSGRPAGERRQRSKTESDCVLL) are disordered. Serine 454 is modified (phosphoserine). Basic and acidic residues predominate over residues 466–482 (AGERRQRSKTESDCVLL).

It belongs to the MINDY deubiquitinase family. FAM63 subfamily.

The catalysed reaction is Thiol-dependent hydrolysis of ester, thioester, amide, peptide and isopeptide bonds formed by the C-terminal Gly of ubiquitin (a 76-residue protein attached to proteins as an intracellular targeting signal).. In terms of biological role, hydrolase that can specifically remove 'Lys-48'-linked conjugated ubiquitin from proteins. Has exodeubiquitinase activity and has a preference for long polyubiquitin chains. May play a regulatory role at the level of protein turnover. This Rattus norvegicus (Rat) protein is Ubiquitin carboxyl-terminal hydrolase MINDY-1 (Mindy1).